The primary structure comprises 264 residues: Signal peptidase I (264 aa).

The Cytoplasmic portion of the chain corresponds to 1 to 18 (MNRDNTKTNKTVKQEFAS). Residues 19–39 (FTFVICIALVIRILIMEPFTV) traverse the membrane as a helical segment. Residues 40–264 (PTGSMKATIL…IFKNLYNVDE (225 aa)) are Periplasmic-facing. Catalysis depends on residues serine 43 and lysine 106.

This sequence belongs to the peptidase S26 family.

The protein localises to the cell inner membrane. It catalyses the reaction Cleavage of hydrophobic, N-terminal signal or leader sequences from secreted and periplasmic proteins.. Complements E.coli mutants temperature-sensitive for LepB function. The protein is Signal peptidase I (lepB) of Rickettsia typhi (strain ATCC VR-144 / Wilmington).